The following is a 184-amino-acid chain: Inactive ribonuclease-like protein 9 (184 aa).

Positions 1 to 25 (MKPLVIKFAWPLPLLLLLLLPPKLQ) are cleaved as a signal peptide. 3 disulfides stabilise this stretch: cysteine 93-cysteine 148, cysteine 111-cysteine 163, and cysteine 118-cysteine 125. Asparagine 147 and asparagine 179 each carry an N-linked (GlcNAc...) asparagine glycan.

The protein belongs to the pancreatic ribonuclease family.

It is found in the secreted. In terms of biological role, does not exhibit any ribonuclease activity. The protein is Inactive ribonuclease-like protein 9 (Rnase9) of Mus musculus (Mouse).